A 618-amino-acid polypeptide reads, in one-letter code: Phostensin (618 aa).

The segment covering 15 to 33 (RRQEEAAVRGREKAERERL) has biased composition (basic and acidic residues). Residues 15–505 (RRQEEAAVRG…PATADAAVPG (491 aa)) are disordered. S54 is modified (phosphoserine). The segment covering 96 to 109 (QQQQQQQQQQQQQQ) has biased composition (low complexity). Basic and acidic residues-rich tracts occupy residues 110–160 (RSEE…ERRL) and 173–197 (LESR…EVRK). Residues S131, S139, S181, and S201 each carry the phosphoserine modification. Residue T205 is modified to Phosphothreonine. S231 bears the Phosphoserine mark. 2 stretches are compositionally biased toward basic and acidic residues: residues 234–245 (DSDHEKLGLTDA) and 271–289 (SGEE…EERT). Residues 308–319 (EAAGSSSGGVEA) are compositionally biased toward low complexity. Residues 348-358 (KVRDRTPRDTE) are compositionally biased toward basic and acidic residues. Positions 429–451 (RPPPAAPLSPPPPAPPAPQPPGD) are enriched in pro residues. The residue at position 437 (S437) is a Phosphoserine. Residue K462 is modified to N6-acetyllysine. The span at 485-505 (APPAAAATPATPATADAAVPG) shows a compositional bias: low complexity. S535 carries the phosphoserine modification. Residues 556-594 (YQYPSESSVLEELGPEPEAPSAPSPPAAQPDDEEDEEEL) form a disordered region. A compositionally biased stretch (pro residues) spans 572 to 583 (PEAPSAPSPPAA). Residues 585–594 (PDDEEDEEEL) show a composition bias toward acidic residues.

As to quaternary structure, interacts with Protein phosphatase 1 (PP1).

It localises to the cytoplasm. Its subcellular location is the cytoskeleton. Its function is as follows. May target protein phosphatase 1 to F-actin cytoskeleton. In Sus scrofa (Pig), this protein is Phostensin (PPP1R18).